The chain runs to 491 residues: UDP-N-acetylmuramate--L-alanine ligase (491 aa).

126 to 132 (GTHGKTT) contributes to the ATP binding site.

The protein belongs to the MurCDEF family.

It is found in the cytoplasm. The enzyme catalyses UDP-N-acetyl-alpha-D-muramate + L-alanine + ATP = UDP-N-acetyl-alpha-D-muramoyl-L-alanine + ADP + phosphate + H(+). It functions in the pathway cell wall biogenesis; peptidoglycan biosynthesis. In terms of biological role, cell wall formation. This Escherichia coli O7:K1 (strain IAI39 / ExPEC) protein is UDP-N-acetylmuramate--L-alanine ligase.